We begin with the raw amino-acid sequence, 209 residues long: Uracil phosphoribosyltransferase (209 aa).

5-phospho-alpha-D-ribose 1-diphosphate-binding positions include R79, R104, and 131–139 (DPMLATGNS). Uracil-binding positions include I194 and 199–201 (GDA). Position 200 (D200) interacts with 5-phospho-alpha-D-ribose 1-diphosphate.

It belongs to the UPRTase family. The cofactor is Mg(2+).

It carries out the reaction UMP + diphosphate = 5-phospho-alpha-D-ribose 1-diphosphate + uracil. It participates in pyrimidine metabolism; UMP biosynthesis via salvage pathway; UMP from uracil: step 1/1. Allosterically activated by GTP. Functionally, catalyzes the conversion of uracil and 5-phospho-alpha-D-ribose 1-diphosphate (PRPP) to UMP and diphosphate. This Sinorhizobium medicae (strain WSM419) (Ensifer medicae) protein is Uracil phosphoribosyltransferase.